Consider the following 159-residue polypeptide: Cystatin-9 (159 aa).

The first 28 residues, 1–28 (MSSPQRRKAMPWALSLLLMGFQLLVTYA), serve as a signal peptide directing secretion.

Belongs to the cystatin family. In terms of tissue distribution, expressed in heart, placenta, lung, liver, skeletal muscle and pancreas. Not expressed in brain. Expressed in epididymis, kidney, testis, spinal cord, and thymus with a strong expression in epididymis and kidney and a weak expression in the spinal cord and thymus.

Its subcellular location is the secreted. Its function is as follows. May be involved in testis development. May play a role in hematopoietic differentiation or inflammation. Has immunomodulatory and antimicrobial functions against Francisella tularensis, a Gram-negative bacteria. The chain is Cystatin-9 (CST9) from Homo sapiens (Human).